The sequence spans 437 residues: Probable glycine dehydrogenase (decarboxylating) subunit 1 (437 aa).

The protein belongs to the GcvP family. N-terminal subunit subfamily. As to quaternary structure, the glycine cleavage system is composed of four proteins: P, T, L and H. In this organism, the P 'protein' is a heterodimer of two subunits.

It carries out the reaction N(6)-[(R)-lipoyl]-L-lysyl-[glycine-cleavage complex H protein] + glycine + H(+) = N(6)-[(R)-S(8)-aminomethyldihydrolipoyl]-L-lysyl-[glycine-cleavage complex H protein] + CO2. The glycine cleavage system catalyzes the degradation of glycine. The P protein binds the alpha-amino group of glycine through its pyridoxal phosphate cofactor; CO(2) is released and the remaining methylamine moiety is then transferred to the lipoamide cofactor of the H protein. In Thermotoga maritima (strain ATCC 43589 / DSM 3109 / JCM 10099 / NBRC 100826 / MSB8), this protein is Probable glycine dehydrogenase (decarboxylating) subunit 1.